Reading from the N-terminus, the 526-residue chain is Methyltetrahydroprotoberberine 14-monooxygenase (526 aa).

A helical membrane pass occupies residues 14-34; the sequence is LLLQYLQPISVALVVIALVWN. C468 contacts heme.

The protein belongs to the cytochrome P450 family. It depends on heme as a cofactor. In terms of tissue distribution, mainly expressed in roots, and barely in stems, leaves and carpels.

The protein resides in the membrane. It catalyses the reaction (S)-cis-N-methylcanadine + reduced [NADPH--hemoprotein reductase] + O2 = allocryptopine + oxidized [NADPH--hemoprotein reductase] + H2O + 2 H(+). The catalysed reaction is (S)-cis-N-methylstylopine + reduced [NADPH--hemoprotein reductase] + O2 = protopine + oxidized [NADPH--hemoprotein reductase] + H2O + 2 H(+). The enzyme catalyses (S)-cis-N-methyltetrahydrothalifendine + reduced [NADPH--hemoprotein reductase] + O2 = 7-hydroxy-8-methoxy-11-methyl-17,19-dioxa-11-azatetracyclo[12.7.0.0(4,9).0(16,20)]henicosa-1(21),4(9),5,7,14,16(20)-hexaen-2-one + oxidized [NADPH--hemoprotein reductase] + H2O + 2 H(+). It carries out the reaction (S)-cis-N-methyltetrahydropalmatine + reduced [NADPH--hemoprotein reductase] + O2 = muramine + oxidized [NADPH--hemoprotein reductase] + H2O + 2 H(+). The protein operates within alkaloid biosynthesis. Its activity is regulated as follows. Repressed by cytochrome P450 inhibitors ketoconazole, metyrapone, prochloraz, ancymidol and cytochrome C. Its function is as follows. Involved in the biosynthesis of the isoquinoline alkaloid sanguinarine. Catalyzes the conversion of N-methylated protoberberine alkaloids N-methylstylopine and N-methylcanadine into protopine and allocryptopine, respectively. Can also use (S)-cis-N-methyltetrahydrothalifendine and (S)-cis-N-methyltetrahydropalmatine as substrates. In Papaver somniferum (Opium poppy), this protein is Methyltetrahydroprotoberberine 14-monooxygenase.